Here is a 216-residue protein sequence, read N- to C-terminus: Probable GTP-binding protein EngB (216 aa).

The 182-residue stretch at 24 to 205 folds into the EngB-type G domain; that stretch reads QTPELAFVGR…WARIASAATD (182 aa). GTP is bound by residues 32–39, 59–63, 86–89, 153–156, and 184–186; these read GRSNVGKS, GRTRA, DLPG, TKMD, and FSA. Residues serine 39 and threonine 61 each contribute to the Mg(2+) site.

Belongs to the TRAFAC class TrmE-Era-EngA-EngB-Septin-like GTPase superfamily. EngB GTPase family. The cofactor is Mg(2+).

Functionally, necessary for normal cell division and for the maintenance of normal septation. This Anaeromyxobacter sp. (strain Fw109-5) protein is Probable GTP-binding protein EngB.